The sequence spans 82 residues: Delta-ctenitoxin-Pn2c (82 aa).

The signal sequence occupies residues 1–17 (MKVAILFLSILVLAVAS). Positions 18-34 (ESIEESRDDFAVEELGR) are excised as a propeptide. 5 disulfide bridges follow: C37–C51, C44–C57, C48–C80, C50–C65, and C59–C63.

In terms of tissue distribution, expressed by the venom gland.

The protein localises to the secreted. In terms of biological role, reversible inhibitor of voltage-gated sodium channels (Nav). Delays the fast inactivation kinetics of neuronal-type sodium channels. In vivo, it induces rat penile erection. This effect may be due to the neuronal nitric oxide synthase (NOS1), since one of its selective inhibitor completely abolishes all the toxic effects of the toxin. This toxin also causes scratching, lacrimation, hypersalivation, sweating and agitation followed by spastic paralysis of the anterior and posterior extremities and death at dose levels of 0.24 mg/mouse. It is also insecticidal to the larval and adult forms of the house fly. The protein is Delta-ctenitoxin-Pn2c of Phoneutria nigriventer (Brazilian armed spider).